The chain runs to 235 residues: Orotidine 5'-phosphate decarboxylase (235 aa).

Substrate is bound by residues D12, K34, 61 to 70 (DMKLLDIDNT), T116, R177, Q186, and R207. The active-site Proton donor is K63.

It belongs to the OMP decarboxylase family. Type 1 subfamily. Homodimer.

It catalyses the reaction orotidine 5'-phosphate + H(+) = UMP + CO2. Its pathway is pyrimidine metabolism; UMP biosynthesis via de novo pathway; UMP from orotate: step 2/2. Its function is as follows. Catalyzes the decarboxylation of orotidine 5'-monophosphate (OMP) to uridine 5'-monophosphate (UMP). In Rhizobium etli (strain CIAT 652), this protein is Orotidine 5'-phosphate decarboxylase.